The sequence spans 121 residues: Large ribosomal subunit protein uL22c (121 aa).

The protein belongs to the universal ribosomal protein uL22 family. As to quaternary structure, part of the 50S ribosomal subunit.

The protein localises to the plastid. It is found in the chloroplast. Its function is as follows. This protein binds specifically to 23S rRNA. In terms of biological role, the globular domain of the protein is located near the polypeptide exit tunnel on the outside of the subunit, while an extended beta-hairpin is found that lines the wall of the exit tunnel in the center of the 70S ribosome. In Guillardia theta (Cryptophyte), this protein is Large ribosomal subunit protein uL22c (rpl22).